Consider the following 705-residue polypeptide: Dolichyl-diphosphooligosaccharide--protein glycosyltransferase subunit STT3A (705 aa).

Residues 1 to 17 lie on the Cytoplasmic side of the membrane; it reads MTKLGFLRLSYEKQDTL. A helical membrane pass occupies residues 18–38; that stretch reads LKLLILSMAAVLSFSTRLFAV. Residues 39–119 are Lumenal-facing; it reads LRFESVIHEF…IDIRNVCVFL (81 aa). Positions 47–49 match the DXD motif 1 motif; sequence EFD. Asp-49 contacts Mn(2+). Residues 120 to 138 traverse the membrane as a helical segment; that stretch reads APLFSSFTTIVTYHLTKEL. At 139–140 the chain is on the cytoplasmic side; sequence KD. Residues 141–158 form a helical membrane-spanning segment; it reads AGAGLLAAAMIAVVPGYI. Residues 159–169 lie on the Lumenal side of the membrane; sequence SRSVAGSYDNE. 2 residues coordinate Mn(2+): Asp-167 and Glu-169. Positions 167 to 169 match the DXD motif 2 motif; it reads DNE. A helical membrane pass occupies residues 170-189; it reads GIAIFCMLLTYYMWIKAVKT. Residues 190–191 lie on the Cytoplasmic side of the membrane; sequence GS. A helical membrane pass occupies residues 192–206; that stretch reads IYWAAKCALAYFYMV. Residues 207 to 211 are Lumenal-facing; the sequence is SSWGG. A helical transmembrane segment spans residues 212 to 228; that stretch reads YVFLINLIPLHVLVLML. Topologically, residues 229-233 are cytoplasmic; the sequence is TGRFS. The chain crosses the membrane as a helical span at residues 234 to 259; sequence HRIYVAYCTVYCLGTILSMQISFVGF. Topologically, residues 260 to 267 are lumenal; the sequence is QPVLSSEH. Residues 268-287 form a helical membrane-spanning segment; that stretch reads MAAFGVFGLCQIHAFVDYLR. Residues 288 to 300 lie on the Cytoplasmic side of the membrane; the sequence is SKLNPQQFEVLFR. Residues 301 to 321 form a helical membrane-spanning segment; that stretch reads SVISLVGFVLLTIGALLMLTG. The Lumenal segment spans residues 322–356; the sequence is KISPWTGRFYSLLDPSYAKNNIPIIASVSEHQPTT. The SVSE motif signature appears at 348 to 351; that stretch reads SVSE. Residues 357–379 traverse the membrane as a helical segment; it reads WSSYYFDLQLLVFMFPVGLYYCF. At 380-385 the chain is on the cytoplasmic side; it reads SNLSDA. A helical membrane pass occupies residues 386–402; the sequence is RIFIIMYGVTSMYFSAV. The Lumenal portion of the chain corresponds to 403–406; sequence MVRL. Residue Arg-405 coordinates dolichyl diphosphooligosaccharide. The helical transmembrane segment at 407–428 threads the bilayer; the sequence is MLVLAPVMCILSGIGVSQVLST. The Cytoplasmic portion of the chain corresponds to 429–453; that stretch reads YMKNLDISRQDKKSKKQQDSTYPIK. Residues 454-473 form a helical membrane-spanning segment; that stretch reads NEVASGMILVMAFFLITYTF. The Lumenal portion of the chain corresponds to 474–705; sequence HSTWVTSEAY…DLDNRGLSRT (232 aa). Residues 525-527 form an interacts with target acceptor peptide in protein substrate region; the sequence is WWD. Positions 525-529 match the WWDYG motif motif; sequence WWDYG. Tyr-530 is a binding site for dolichyl diphosphooligosaccharide. N-linked (GlcNAc...) asparagine glycans are attached at residues Asn-537 and Asn-544. Asn-548 carries an N-linked (GlcNAc...) (high mannose) asparagine glycan. Residues 592 to 599 carry the DK motif motif; it reads DINKFLWM.

It belongs to the STT3 family. Component of the oligosaccharyltransferase (OST) complex. There are 2 OST complexes, OST-A and OST-B, which contain STT3A or STT3B as catalytic subunit, respectively. OST-A and OST-B contain common core subunits RPN1, RPN2, OST48, OST4, DAD1 and TMEM258, and OST-A contains DC2/OSTC and KRTCAP2/KCP2 specific accessory subunits. OST-A complex assembly occurs through the formation of 3 subcomplexes. Subcomplex 1 contains RPN1 and TMEM258, subcomplex 2 contains the OST-A-specific subunits STT3A, DC2/OSTC, and KCP2 as well as the core subunit OST4, and subcomplex 3 contains RPN2, DAD1, and OST48. The OST-A complex can form stable complexes with the Sec61 complex or with both the Sec61 and TRAP complexes. The cofactor is Mg(2+). Requires Mn(2+) as cofactor.

It localises to the endoplasmic reticulum membrane. The catalysed reaction is a di-trans,poly-cis-dolichyl diphosphooligosaccharide + L-asparaginyl-[protein] = N(4)-(oligosaccharide-(1-&gt;4)-N-acetyl-beta-D-glucosaminyl-(1-&gt;4)-N-acetyl-beta-D-glucosaminyl)-L-asparaginyl-[protein] + a di-trans,poly-cis-dolichyl diphosphate + H(+). Its pathway is protein modification; protein glycosylation. In terms of biological role, catalytic subunit of the oligosaccharyl transferase (OST) complex that catalyzes the initial transfer of a defined glycan (Glc(3)Man(9)GlcNAc(2) in eukaryotes) from the lipid carrier dolichol-pyrophosphate to an asparagine residue within an Asn-X-Ser/Thr consensus motif in nascent polypeptide chains, the first step in protein N-glycosylation. N-glycosylation occurs cotranslationally and the complex associates with the Sec61 complex at the channel-forming translocon complex that mediates protein translocation across the endoplasmic reticulum (ER). All subunits are required for a maximal enzyme activity. This subunit contains the active site and the acceptor peptide and donor lipid-linked oligosaccharide (LLO) binding pockets. STT3A is present in the majority of OST complexes and mediates cotranslational N-glycosylation of most sites on target proteins, while STT3B-containing complexes are required for efficient post-translational glycosylation and mediate glycosylation of sites that have been skipped by STT3A. STT3A-containing OST-A complex is also required to prevent hyperglycosylation of some target proteins by preventing glycosylation of facultative sites before folding of target proteins is completed. The sequence is that of Dolichyl-diphosphooligosaccharide--protein glycosyltransferase subunit STT3A from Bos taurus (Bovine).